The chain runs to 66 residues: MLKNFKNFTLEDMKAKRLELKKEYLDLRFKSVVGHVENPLKKREIRRDIARLNTMICEYKLGIRKV.

Belongs to the universal ribosomal protein uL29 family.

This Borreliella afzelii (strain PKo) (Borrelia afzelii) protein is Large ribosomal subunit protein uL29.